We begin with the raw amino-acid sequence, 167 residues long: G/U mismatch-specific DNA glycosylase (167 aa).

The protein belongs to the uracil-DNA glycosylase (UDG) superfamily. TDG/mug family. In terms of assembly, binds DNA as a monomer.

Its subcellular location is the cytoplasm. It carries out the reaction Specifically hydrolyzes mismatched double-stranded DNA and polynucleotides, releasing free uracil.. Functionally, excises ethenocytosine and uracil, which can arise by alkylation or deamination of cytosine, respectively, from the corresponding mispairs with guanine in ds-DNA. It is capable of hydrolyzing the carbon-nitrogen bond between the sugar-phosphate backbone of the DNA and the mispaired base. The complementary strand guanine functions in substrate recognition. Required for DNA damage lesion repair in stationary-phase cells. The chain is G/U mismatch-specific DNA glycosylase from Pectobacterium carotovorum subsp. carotovorum (strain PC1).